Consider the following 1649-residue polypeptide: eIF-2-alpha kinase GCN2 (1649 aa).

Positions M1–E26 are disordered. The 113-residue stretch at H25 to H137 folds into the RWD domain. Residues H146–S205 are a coiled coil. The tract at residues H227–A260 is disordered. S230 is modified (phosphoserine). Basic residues predominate over residues A239–R249. Protein kinase domains lie at V296 to I539 and F590 to L1001. ATP is bound by residues L596–V604 and K619. The interval P662–I785 is disordered. T667 is modified (phosphothreonine). Polar residues predominate over residues L705–A721. Composition is skewed to acidic residues over residues S731–R740 and S754–D764. The active-site Proton acceptor is the D847. Phosphothreonine is present on T870. A phosphothreonine; by autocatalysis mark is found at T899 and T904. The segment at T1022–K1493 is histidyl-tRNA synthetase-like. K1259 carries the N6-acetyllysine modification.

The protein belongs to the protein kinase superfamily. Ser/Thr protein kinase family. GCN2 subfamily. In terms of assembly, homodimer; homodimerization is important for kinase activation by uncharged tRNAs. Interacts with GCN1; this interaction stimulates EIF2AK4/GCN2 kinase activity and is impaired by IMPACT upon a variety of stress conditions, such as amino acid depletion, UV-C irradiation, proteasome inhibitor treatment and glucose deprivation. Interacts with DNAJC3; this interaction inhibits EIF2AK4/GCN2 kinase activity during endoplasmic reticulum (ER), hypothermic and amino acid-starving stress conditions. Interacts with MAP3K20; activates EIF2AK4/GCN2 kinase activity in response to moderate ribotoxic stress. Post-translationally, autophosphorylated; autophosphorylation on Thr-899 is increased upon amino acid starvation and in UV irradiation cells and inhibited in presence of IMPACT.

It is found in the cytoplasm. The catalysed reaction is L-seryl-[protein] + ATP = O-phospho-L-seryl-[protein] + ADP + H(+). It catalyses the reaction L-threonyl-[protein] + ATP = O-phospho-L-threonyl-[protein] + ADP + H(+). Metabolic-stress sensing protein kinase that phosphorylates the alpha subunit of eukaryotic translation initiation factor 2 (EIF2S1/eIF-2-alpha) in response to low amino acid availability. Plays a role as an activator of the integrated stress response (ISR) required for adaptation to amino acid starvation. EIF2S1/eIF-2-alpha phosphorylation in response to stress converts EIF2S1/eIF-2-alpha into a global protein synthesis inhibitor, leading to a global attenuation of cap-dependent translation, and thus to a reduced overall utilization of amino acids, while concomitantly initiating the preferential translation of ISR-specific mRNAs, such as the transcriptional activator ATF4, and hence allowing ATF4-mediated reprogramming of amino acid biosynthetic gene expression to alleviate nutrient depletion. Required for the translational induction of protein kinase PRKCH following amino acid starvation. Binds uncharged tRNAs. Involved in cell cycle arrest by promoting cyclin D1 mRNA translation repression after the unfolded protein response pathway (UPR) activation or cell cycle inhibitor CDKN1A/p21 mRNA translation activation in response to amino acid deprivation. Plays a role in the consolidation of synaptic plasticity, learning as well as formation of long-term memory. Plays a role in neurite outgrowth inhibition. Plays a role in feeding behavior to maintain amino acid homeostasis; contributes to the innate aversion toward diets of imbalanced amino acid composition. Plays a proapoptotic role in response to glucose deprivation. Promotes global cellular protein synthesis repression in response to UV irradiation independently of the stress-activated protein kinase/c-Jun N-terminal kinase (SAPK/JNK) and p38 MAPK signaling pathways. Plays a role in the antiviral response against alphavirus infection; impairs early viral mRNA translation of the incoming genomic virus RNA, thus preventing alphavirus replication. The polypeptide is eIF-2-alpha kinase GCN2 (Rattus norvegicus (Rat)).